We begin with the raw amino-acid sequence, 394 residues long: GDP-mannose transporter (394 aa).

Residues 1-56 (MSNKKNEDIEMRAVEGANDFGGEKDPFLGRNSPVLRPRGREPTASAYFGKLDNSPG) are Cytoplasmic-facing. Residues 57-77 (ASIIAYCLSSISMTVVNKYVV) form a helical membrane-spanning segment. Residues 78–81 (SGES) lie on the Lumenal side of the membrane. The helical transmembrane segment at 82 to 102 (WNLNFFYLGVQSLVCTIAILL) threads the bilayer. Topologically, residues 103 to 122 (SRQTGLIKNLAPFDSNKAKR) are cytoplasmic. A helical transmembrane segment spans residues 123 to 145 (WFPVSLLLVSMIYTGANALQYLS). Residues 146 to 150 (VPVYT) are Lumenal-facing. Residues 151-168 (IFKNLTIIVIAYGEVLWF) traverse the membrane as a helical segment. The Cytoplasmic portion of the chain corresponds to 169–174 (GGSVTP). Residues 175 to 199 (LMLLSFGLMVLSSVVAAWADIQAAI) traverse the membrane as a helical segment. Topologically, residues 200–207 (DGVGHSAE) are lumenal. Residues 208–228 (TSAALATLNAGYAWMGLNVVC) traverse the membrane as a helical segment. The Cytoplasmic segment spans residues 229 to 249 (TSSYLLGMRKVIKKMNFKDYD). A helical transmembrane segment spans residues 250-270 (SMFYNNLLTIPVLVVCSLLVE). Residues 271–288 (DWSSENLAKNFPIETRNK) lie on the Lumenal side of the membrane. A helical membrane pass occupies residues 289-309 (LMVGMIYSGLAAIFISYCSAW). Residues 310–317 (CIRVTSST) lie on the Cytoplasmic side of the membrane. A helical transmembrane segment spans residues 318–338 (TYSMVGALNKLPIAISGLIFF). Over 339–341 (DAP) the chain is Lumenal. A helical transmembrane segment spans residues 342-362 (ITFGSITAIAVGFVSGLVFAW). Over 363 to 394 (AKVRQKAQEAGLLPTTKPTMSASAQSNRDANS) the chain is Cytoplasmic.

The protein belongs to the TPT transporter family. SLC35D subfamily. Homooligomer.

It localises to the golgi apparatus membrane. The protein localises to the cytoplasmic vesicle membrane. It is found in the endoplasmic reticulum membrane. Functionally, involved in the import of GDP-mannose from the cytoplasm into the Golgi lumen. The protein is GDP-mannose transporter (VRG4) of Chaetomium globosum (strain ATCC 6205 / CBS 148.51 / DSM 1962 / NBRC 6347 / NRRL 1970) (Soil fungus).